The chain runs to 1516 residues: Mediator of RNA polymerase II transcription subunit 14 (1516 aa).

2 disordered regions span residues 22–98 (LSSQ…EVPA) and 1434–1516 (MHRQ…YPPQ). The span at 34–47 (SPAAPISPAPSGSA) shows a compositional bias: low complexity. Over residues 72–83 (SEVDVKSIHSSD) the composition is skewed to basic and acidic residues. A compositionally biased stretch (low complexity) spans 1463-1473 (SHQQHMMNPGS). Residues 1474 to 1483 (VGPGSVGGPG) are compositionally biased toward gly residues. The segment covering 1502–1516 (QSYHHPLHHQQYPPQ) has biased composition (low complexity).

This sequence belongs to the Mediator complex subunit 14 family. In terms of assembly, component of the Mediator complex.

It is found in the nucleus. In terms of biological role, component of the Mediator complex, a coactivator involved in the regulated transcription of nearly all RNA polymerase II-dependent genes. Mediator functions as a bridge to convey information from gene-specific regulatory proteins to the basal RNA polymerase II transcription machinery. Mediator is recruited to promoters by direct interactions with regulatory proteins and serves as a scaffold for the assembly of a functional preinitiation complex with RNA polymerase II and the general transcription factors. Required for transcription in the embryo and for phosphorylation of the RNA polymerase II C-terminal domain repeat. The polypeptide is Mediator of RNA polymerase II transcription subunit 14 (rgr-1) (Caenorhabditis elegans).